Here is a 1021-residue protein sequence, read N- to C-terminus: 2-oxoglutarate dehydrogenase complex component E1 (1021 aa).

A mitochondrion-targeting transit peptide spans 1-40 (MFNLRTCASKLRPLTASQTIRSLKHNRPAAPRTFQQFRCL). The Ca(2+) site is built by His142, Asp155, and Asp157. Positions 311, 410, 443, and 445 each coordinate thiamine diphosphate. 3 residues coordinate Mg(2+): Asp410, Asn443, and Ile445. Lys533 is covalently cross-linked (Glycyl lysine isopeptide (Lys-Gly) (interchain with G-Cter in ubiquitin)). Thiamine diphosphate is bound at residue Gln675.

This sequence belongs to the alpha-ketoglutarate dehydrogenase family. As to quaternary structure, homodimer. The 2-oxoglutarate dehydrogenase complex is composed of OGDH (2-oxoglutarate dehydrogenase; E1), DLST (dihydrolipoamide succinyltransferase; E2) and DLD (dihydrolipoamide dehydrogenase; E3). It contains multiple copies of the three enzymatic components (E1, E2 and E3). In the nucleus, the 2-oxoglutarate dehydrogenase complex associates with kat2a. The cofactor is thiamine diphosphate. Mg(2+) serves as cofactor. As to expression, expressed in the brain.

The protein localises to the mitochondrion. It localises to the nucleus. The catalysed reaction is N(6)-[(R)-lipoyl]-L-lysyl-[protein] + 2-oxoglutarate + H(+) = N(6)-[(R)-S(8)-succinyldihydrolipoyl]-L-lysyl-[protein] + CO2. Its activity is regulated as follows. Calcium ions and ADP stimulate, whereas ATP and NADH reduce catalytic activity. Functionally, 2-oxoglutarate dehydrogenase (E1o) component of the 2-oxoglutarate dehydrogenase complex (OGDHC). Participates in the first step, rate limiting for the overall conversion of 2-oxoglutarate to succinyl-CoA and CO(2) catalyzed by the whole OGDHC. Catalyzes the irreversible decarboxylation of 2-oxoglutarate (alpha-ketoglutarate) via the thiamine diphosphate (ThDP) cofactor and subsequent transfer of the decarboxylated acyl intermediate on an oxidized dihydrolipoyl group that is covalently amidated to the E2 enzyme (dihydrolipoyllysine-residue succinyltransferase or DLST). Plays a key role in the Krebs (citric acid) cycle, which is a common pathway for oxidation of fuel molecules, including carbohydrates, fatty acids, and amino acids. Can catalyze the decarboxylation of 2-oxoadipate in vitro, but at a much lower rate than 2-oxoglutarate. Mainly active in the mitochondrion. A fraction of the 2-oxoglutarate dehydrogenase complex also localizes in the nucleus and is required for lysine succinylation of histones: associates with KAT2A on chromatin and provides succinyl-CoA to histone succinyltransferase KAT2A. This Xenopus laevis (African clawed frog) protein is 2-oxoglutarate dehydrogenase complex component E1 (ogdh).